The chain runs to 290 residues: Lysine export transcriptional regulatory protein LysG (290 aa).

Residues 1 to 57 form the HTH lysR-type domain; sequence MNPIQLDTLLSIIDEGSFEGASLALSISPSAVSQRVKALEHHVGRVLVSRTQPAKAT. Positions 18 to 37 form a DNA-binding region, H-T-H motif; it reads FEGASLALSISPSAVSQRVK.

The protein belongs to the LysR transcriptional regulatory family.

In terms of biological role, positively regulates the expression of the exporter LysE. Induction requires the presence of a coinducer, which is either intracellular L-lysine, L-arginine or L-citrulline. L-histidine also acts as a coinducer of lysE expression, but this amino acid is not exported by LysE. The lysEG system prevents bacteriostasis due to elevated L-lysine or L-arginine concentrations that arise during growth in the presence of peptides or in mutants possessing a deregulated biosynthesis pathway. The sequence is that of Lysine export transcriptional regulatory protein LysG from Corynebacterium glutamicum (strain ATCC 13032 / DSM 20300 / JCM 1318 / BCRC 11384 / CCUG 27702 / LMG 3730 / NBRC 12168 / NCIMB 10025 / NRRL B-2784 / 534).